The following is a 147-amino-acid chain: Large ribosomal subunit protein uL13 (147 aa).

The tract at residues 128–147 (DQHPHGAQQPQPFEITQVAQ) is disordered.

The protein belongs to the universal ribosomal protein uL13 family. As to quaternary structure, part of the 50S ribosomal subunit.

In terms of biological role, this protein is one of the early assembly proteins of the 50S ribosomal subunit, although it is not seen to bind rRNA by itself. It is important during the early stages of 50S assembly. This chain is Large ribosomal subunit protein uL13, found in Streptomyces coelicolor (strain ATCC BAA-471 / A3(2) / M145).